We begin with the raw amino-acid sequence, 270 residues long: UPF0354 protein BC_4690 (270 aa).

Belongs to the UPF0354 family.

The sequence is that of UPF0354 protein BC_4690 from Bacillus cereus (strain ATCC 14579 / DSM 31 / CCUG 7414 / JCM 2152 / NBRC 15305 / NCIMB 9373 / NCTC 2599 / NRRL B-3711).